The following is a 171-amino-acid chain: Transcription antitermination protein NusB (171 aa).

Belongs to the NusB family.

Its function is as follows. Involved in transcription antitermination. Required for transcription of ribosomal RNA (rRNA) genes. Binds specifically to the boxA antiterminator sequence of the ribosomal RNA (rrn) operons. This is Transcription antitermination protein NusB from Brucella suis (strain ATCC 23445 / NCTC 10510).